Here is a 357-residue protein sequence, read N- to C-terminus: Protein MGF 360-14L (357 aa).

This sequence belongs to the asfivirus MGF 360 family. As to quaternary structure, interacts with host IRF3 and TRIM21; these interactions mediates degradation of IRF3 through TRIM21 and ubiquitin-meditated proteolysis.

The protein localises to the host cytoplasm. Functionally, plays a role in virus cell tropism, and may be required for efficient virus replication in macrophages. Also inhibits the host cGAS/STING-mediated type I interferon production by inducing host IRF3 degradation through the proteasome pathway. The protein is Protein MGF 360-14L of Ornithodoros (relapsing fever ticks).